We begin with the raw amino-acid sequence, 203 residues long: Imidazoleglycerol-phosphate dehydratase (203 aa).

Belongs to the imidazoleglycerol-phosphate dehydratase family.

Its subcellular location is the cytoplasm. The enzyme catalyses D-erythro-1-(imidazol-4-yl)glycerol 3-phosphate = 3-(imidazol-4-yl)-2-oxopropyl phosphate + H2O. It participates in amino-acid biosynthesis; L-histidine biosynthesis; L-histidine from 5-phospho-alpha-D-ribose 1-diphosphate: step 6/9. This is Imidazoleglycerol-phosphate dehydratase from Salinispora tropica (strain ATCC BAA-916 / DSM 44818 / JCM 13857 / NBRC 105044 / CNB-440).